Reading from the N-terminus, the 719-residue chain is MRENWAVVALFTLCIVGFELRFIHGATDASDTSALNTLFSGMHSPAQLTQWTAAAGDPCGQNWRGVTCSGSRVTQIKLSGLELSGTLGGYMLDKLTSLTELDLSSNNLGGDLPYQFPPNLQRLNLANNQFTGAASYSLSQITPLKYLNLGHNQFKGQIAIDFSKLDSLTTLDFSFNSFTNSLPATFSSLTSLKSLYLQNNQFSGTVDVLAGLPLETLNIANNDFTGWIPSSLKGITLIKDGNSFNTGPAPPPPPGTPPIRGSPSRKSGGRESRSSDESTRNGDSKKSGIGAGAIAGIIISLLVVTALLVAFFLFRRKKSKRSSPMDIEKTDNQPFTLASNDFHENNSIQSSSSVETKKLDTSLSINLRPPPIDRNKSFDDEDSTRKPIAVKKSTVVVPSNVRLYSVADLQIATGSFSVDNLLGEGTFGRVYRAEFDDGKVLAVKKIDSSALPHGMTDDFIEMVSKIANLDHPNVTKLVGYCAEHGQHLVVYEFHKNGSLHDFLHLSEEESKALVWNSRVKIALGTARALEYLHEVCSPSIVDKNIKSANILLDSELNPHLSDSGLASFLPTANELLNQTDEGYSAPEVSMSGQYSLKSDIYSFGVVMLELLTGRKPFDSTRSRSEQSLVRWATPQLHDIDALAKMVDPALKGLYPVKSLSRFADVIALCVQPEPEFRPPMSEVVQALVVLVQRANMSKRTVGVDPSQRAGSADTTSDYM.

The first 29 residues, 1 to 29 (MRENWAVVALFTLCIVGFELRFIHGATDA), serve as a signal peptide directing secretion. Residues 30 to 293 (SDTSALNTLF…SKKSGIGAGA (264 aa)) are Extracellular-facing. LRR repeat units follow at residues 97 to 118 (SLTE…QFPP), 119 to 140 (NLQR…SLSQ), 143 to 164 (PLKY…DFSK), 167 to 190 (SLTT…SSLT), 191 to 213 (SLKS…AGLP), and 214 to 234 (LETL…SLKG). The interval 242–287 (NSFNTGPAPPPPPGTPPIRGSPSRKSGGRESRSSDESTRNGDSKKS) is disordered. A compositionally biased stretch (pro residues) spans 248 to 257 (PAPPPPPGTP). A compositionally biased stretch (basic and acidic residues) spans 268–286 (GGRESRSSDESTRNGDSKK). A helical transmembrane segment spans residues 294–314 (IAGIIISLLVVTALLVAFFLF). Topologically, residues 315–719 (RRKKSKRSSP…GSADTTSDYM (405 aa)) are cytoplasmic. Disordered regions lie at residues 322–355 (SSPM…SSVE) and 364–383 (SINL…DEDS). Over residues 332–354 (NQPFTLASNDFHENNSIQSSSSV) the composition is skewed to polar residues. Residue Ser-377 is modified to Phosphoserine. Positions 416–690 (FSVDNLLGEG…SEVVQALVVL (275 aa)) constitute a Protein kinase domain. Residues 422-430 (LGEGTFGRV) and Lys-444 contribute to the ATP site. The interval 700–719 (TVGVDPSQRAGSADTTSDYM) is disordered. A compositionally biased stretch (polar residues) spans 708–719 (RAGSADTTSDYM).

Belongs to the protein kinase superfamily. Ser/Thr protein kinase family. In terms of tissue distribution, expressed in seedlings, roots, stems, leaves, flowers and siliques.

The protein resides in the membrane. The polypeptide is Protein STRUBBELIG-RECEPTOR FAMILY 6 (SRF6) (Arabidopsis thaliana (Mouse-ear cress)).